Reading from the N-terminus, the 239-residue chain is Putative 3-methyladenine DNA glycosylase (239 aa).

It belongs to the DNA glycosylase MPG family.

This is Putative 3-methyladenine DNA glycosylase from Pseudomonas aeruginosa (strain UCBPP-PA14).